A 628-amino-acid polypeptide reads, in one-letter code: MTISDIGSQATTHTPVKASKADALKTPAHRSETDARFEEDARDLHRILPASRKVYIEGSRPDIQVPMREITLDPTPIQGVSESEWEQNPPFYVYDTSGVYTDPNAAIDLTKGLPKLREGWIDERGDTEQLAGLSSSYGLARARDISTANLRFAHIDKPRRAKAVDGKVGNVTQLHYARRGIITPEMEYIAIRETQKQHELTDMRQHEGETFGAHTPAIITPEFVRSEVAAGRAIIPNNINHPESEPMIIGRNFLVKINANIGNSALGSSIDEEVSKMTWATRWGADNIMDLSTGNHIHETREWLIRNSPVPIGTVPIYQALEKVDGVAEDLTWEIFRDTLIEQAEQGVDYFTIHAGVLLEYVPLTAGRLTGIVSRGGSIMAQWCMFHNKESFLYTHFEDICEIMKQYDVAFSLGDGLRPGCLQDANDEAQFGELRTLGELTQVAWKHDVQVMIEGPGHVAMNRIKENMDLQLEVCADAPFYTLGPLTTDIAPGYDHITSAIGAAMIGWFGTAMLCYVTPKEHLGLPNKKDVKDGIITYKIAAHAADLAKGHPGAQARDNALSKARFEFRWDDQFNLALDPDTAREFHDETLPKDAHKTAHFCSMCGPKFCSMKITQNVREYAKGLNAQ.

Positions 1-14 are enriched in polar residues; it reads MTISDIGSQATTHT. Positions 1-37 are disordered; sequence MTISDIGSQATTHTPVKASKADALKTPAHRSETDARF. Basic and acidic residues predominate over residues 19–37; sequence SKADALKTPAHRSETDARF. Residues Asn-260, Met-289, Tyr-318, His-354, 374-376, 415-418, and Glu-454 contribute to the substrate site; these read SRG and DGLR. His-458 lines the Zn(2+) pocket. Tyr-481 serves as a coordination point for substrate. His-522 provides a ligand contact to Zn(2+). Positions 602, 605, and 610 each coordinate [4Fe-4S] cluster.

Belongs to the ThiC family. As to quaternary structure, homodimer. It depends on [4Fe-4S] cluster as a cofactor.

The catalysed reaction is 5-amino-1-(5-phospho-beta-D-ribosyl)imidazole + S-adenosyl-L-methionine = 4-amino-2-methyl-5-(phosphooxymethyl)pyrimidine + CO + 5'-deoxyadenosine + formate + L-methionine + 3 H(+). Its pathway is cofactor biosynthesis; thiamine diphosphate biosynthesis. Its function is as follows. Catalyzes the synthesis of the hydroxymethylpyrimidine phosphate (HMP-P) moiety of thiamine from aminoimidazole ribotide (AIR) in a radical S-adenosyl-L-methionine (SAM)-dependent reaction. This Psychrobacter cryohalolentis (strain ATCC BAA-1226 / DSM 17306 / VKM B-2378 / K5) protein is Phosphomethylpyrimidine synthase.